The sequence spans 79 residues: MMKKLLLTLIKLYRILISPLFPPSCRFQPTCSQYALDAVEIHGVWRGSCLALKRILRCHPLHPGGYDPVPNPEQGKISS.

Belongs to the UPF0161 family.

The protein resides in the cell inner membrane. Could be involved in insertion of integral membrane proteins into the membrane. This Synechocystis sp. (strain ATCC 27184 / PCC 6803 / Kazusa) protein is Putative membrane protein insertion efficiency factor.